Here is a 25-residue protein sequence, read N- to C-terminus: Toxin Tpa3 (25 aa).

This sequence belongs to the non-disulfide-bridged peptide (NDBP) superfamily. Expressed by the venom gland.

It is found in the secreted. Its function is as follows. Unknown. Is not toxic to mammals. This chain is Toxin Tpa3, found in Tityus pachyurus (Colombian scorpion).